Consider the following 468-residue polypeptide: Adenosylhomocysteinase (468 aa).

3 residues coordinate substrate: Thr-57, Asp-132, and Glu-194. 195–197 contributes to the NAD(+) binding site; it reads TTT. Positions 224 and 228 each coordinate substrate. NAD(+) contacts are provided by residues Asn-229, 258–263, Glu-281, Asn-316, 337–339, and Asn-382; these read GFGDVG and IGH.

Belongs to the adenosylhomocysteinase family. It depends on NAD(+) as a cofactor.

It is found in the cytoplasm. The enzyme catalyses S-adenosyl-L-homocysteine + H2O = L-homocysteine + adenosine. It functions in the pathway amino-acid biosynthesis; L-homocysteine biosynthesis; L-homocysteine from S-adenosyl-L-homocysteine: step 1/1. Its function is as follows. May play a key role in the regulation of the intracellular concentration of adenosylhomocysteine. In Methylorubrum extorquens (strain CM4 / NCIMB 13688) (Methylobacterium extorquens), this protein is Adenosylhomocysteinase.